Reading from the N-terminus, the 422-residue chain is Glucose-1-phosphate adenylyltransferase (422 aa).

Residues Tyr109, Gly175, 190–191, and Ser208 each bind alpha-D-glucose 1-phosphate; that span reads EK.

This sequence belongs to the bacterial/plant glucose-1-phosphate adenylyltransferase family. Homotetramer.

The catalysed reaction is alpha-D-glucose 1-phosphate + ATP + H(+) = ADP-alpha-D-glucose + diphosphate. Its pathway is glycan biosynthesis; glycogen biosynthesis. Involved in the biosynthesis of ADP-glucose, a building block required for the elongation reactions to produce glycogen. Catalyzes the reaction between ATP and alpha-D-glucose 1-phosphate (G1P) to produce pyrophosphate and ADP-Glc. The sequence is that of Glucose-1-phosphate adenylyltransferase from Shewanella amazonensis (strain ATCC BAA-1098 / SB2B).